Reading from the N-terminus, the 645-residue chain is Threonine--tRNA ligase (645 aa).

Residues 1–61 enclose the TGS domain; sequence MPVITLPDGS…SDDAKLSIIT (61 aa). The segment at 243-534 is catalytic; the sequence is DHRKLGKKLD…LIEDTEGAFP (292 aa). Zn(2+) is bound by residues C334, H385, and H511.

It belongs to the class-II aminoacyl-tRNA synthetase family. In terms of assembly, homodimer. Zn(2+) serves as cofactor.

It localises to the cytoplasm. It catalyses the reaction tRNA(Thr) + L-threonine + ATP = L-threonyl-tRNA(Thr) + AMP + diphosphate + H(+). Catalyzes the attachment of threonine to tRNA(Thr) in a two-step reaction: L-threonine is first activated by ATP to form Thr-AMP and then transferred to the acceptor end of tRNA(Thr). Also edits incorrectly charged L-seryl-tRNA(Thr). This is Threonine--tRNA ligase from Marinomonas sp. (strain MWYL1).